The primary structure comprises 366 residues: Capsular polysaccharide phosphotransferase LcbA (366 aa).

Belongs to the stealth family.

In Neisseria meningitidis, this protein is Capsular polysaccharide phosphotransferase LcbA (lcbA).